The primary structure comprises 432 residues: Probable rhamnogalacturonase E (432 aa).

The signal sequence occupies residues 1 to 21; the sequence is MQSKTFSVLSSCLLLIATVQG. Cysteine 42 and cysteine 68 form a disulfide bridge. Residues asparagine 53, asparagine 91, and asparagine 106 are each glycosylated (N-linked (GlcNAc...) asparagine). The Proton donor role is filled by aspartate 221. Cysteines 223 and 240 form a disulfide. N-linked (GlcNAc...) asparagine glycosylation is found at asparagine 241 and asparagine 256. Histidine 296 is an active-site residue. 2 disulfide bridges follow: cysteine 329-cysteine 335 and cysteine 357-cysteine 366.

Belongs to the glycosyl hydrolase 28 family.

The protein resides in the secreted. Functionally, pectinolytic enzymes consist of four classes of enzymes: pectine lyase, polygalacturonase, pectin methylesterase and rhamnogalacturonase. Hydrolyzes alpha-D-galacturonopyranosyl-(1,2)-alpha-L-rhamnopyranosyl linkages in the backbone of the hairy regions of pectins. This Aspergillus oryzae (strain ATCC 42149 / RIB 40) (Yellow koji mold) protein is Probable rhamnogalacturonase E (rhgE).